The sequence spans 505 residues: tRNA-2-methylthio-N(6)-dimethylallyladenosine synthase (505 aa).

The MTTase N-terminal domain occupies 14–132 (RTYEVRTYGC…LPVLLERARV (119 aa)). [4Fe-4S] cluster-binding residues include C23, C61, C95, C169, C173, and C176. Residues 155-386 (RESAYAAWVS…ALQEEISWDE (232 aa)) enclose the Radical SAM core domain. The TRAM domain occupies 388–456 (KKQVGRTLEL…PHHLLAEGAV (69 aa)).

The protein belongs to the methylthiotransferase family. MiaB subfamily. In terms of assembly, monomer. It depends on [4Fe-4S] cluster as a cofactor.

The protein localises to the cytoplasm. The catalysed reaction is N(6)-dimethylallyladenosine(37) in tRNA + (sulfur carrier)-SH + AH2 + 2 S-adenosyl-L-methionine = 2-methylsulfanyl-N(6)-dimethylallyladenosine(37) in tRNA + (sulfur carrier)-H + 5'-deoxyadenosine + L-methionine + A + S-adenosyl-L-homocysteine + 2 H(+). Its function is as follows. Catalyzes the methylthiolation of N6-(dimethylallyl)adenosine (i(6)A), leading to the formation of 2-methylthio-N6-(dimethylallyl)adenosine (ms(2)i(6)A) at position 37 in tRNAs that read codons beginning with uridine. This is tRNA-2-methylthio-N(6)-dimethylallyladenosine synthase from Streptomyces coelicolor (strain ATCC BAA-471 / A3(2) / M145).